A 142-amino-acid chain; its full sequence is Hemoglobin subunit alpha-A (142 aa).

The Globin domain occupies 2 to 142 (VLSANDKTNV…VGNVLTAKYR (141 aa)). Histidine 59 provides a ligand contact to O2. Histidine 88 is a heme b binding site.

It belongs to the globin family. In terms of assembly, heterotetramer of two alpha chains and two beta chains. As to expression, red blood cells.

In terms of biological role, involved in oxygen transport from the lung to the various peripheral tissues. This Accipiter gentilis (Northern goshawk) protein is Hemoglobin subunit alpha-A (HBAA).